Here is a 717-residue protein sequence, read N- to C-terminus: Delta-1-pyrroline-5-carboxylate synthase (717 aa).

A glutamate 5-kinase region spans residues 1-296 (MDAVDSTRAF…WAPVGDVGAR (296 aa)). Substrate-binding residues include Ser60, Asp157, and Asn176. Residues 196-197 (SD) and 236-242 (RGGMTAK) contribute to the ATP site. Positions 297–717 (DMAVAARESS…YTHKDLTSHA (421 aa)) are gamma-glutamyl phosphate reductase.

It in the N-terminal section; belongs to the glutamate 5-kinase family. This sequence in the C-terminal section; belongs to the gamma-glutamyl phosphate reductase family. As to expression, expressed at high levels in leaves and is inducible in roots subjected to salt stress.

It catalyses the reaction L-glutamate + ATP = L-glutamyl 5-phosphate + ADP. The catalysed reaction is L-glutamate 5-semialdehyde + phosphate + NADP(+) = L-glutamyl 5-phosphate + NADPH + H(+). It participates in amino-acid biosynthesis; L-proline biosynthesis; L-glutamate 5-semialdehyde from L-glutamate: step 1/2. Its pathway is amino-acid biosynthesis; L-proline biosynthesis; L-glutamate 5-semialdehyde from L-glutamate: step 2/2. Feedback regulated by proline. P5CS plays a key role in proline biosynthesis, leading to osmoregulation in plants. This Actinidia deliciosa (Kiwi) protein is Delta-1-pyrroline-5-carboxylate synthase.